The following is an 872-amino-acid chain: Alanine--tRNA ligase (872 aa).

Zn(2+) contacts are provided by His-567, His-571, Cys-669, and His-673.

Belongs to the class-II aminoacyl-tRNA synthetase family. Zn(2+) serves as cofactor.

It is found in the cytoplasm. The catalysed reaction is tRNA(Ala) + L-alanine + ATP = L-alanyl-tRNA(Ala) + AMP + diphosphate. In terms of biological role, catalyzes the attachment of alanine to tRNA(Ala) in a two-step reaction: alanine is first activated by ATP to form Ala-AMP and then transferred to the acceptor end of tRNA(Ala). Also edits incorrectly charged Ser-tRNA(Ala) and Gly-tRNA(Ala) via its editing domain. This chain is Alanine--tRNA ligase, found in Streptococcus pyogenes serotype M1.